We begin with the raw amino-acid sequence, 236 residues long: Pyridoxine 5'-phosphate synthase (236 aa).

Asn7 is a binding site for 3-amino-2-oxopropyl phosphate. 9–10 (DH) is a 1-deoxy-D-xylulose 5-phosphate binding site. Arg18 is a 3-amino-2-oxopropyl phosphate binding site. Residue His43 is the Proton acceptor of the active site. Residues Arg45 and His50 each coordinate 1-deoxy-D-xylulose 5-phosphate. The active-site Proton acceptor is Glu69. Thr99 serves as a coordination point for 1-deoxy-D-xylulose 5-phosphate. Residue His190 is the Proton donor of the active site. 3-amino-2-oxopropyl phosphate is bound by residues Gly191 and 212 to 213 (GH).

Belongs to the PNP synthase family. Homooctamer; tetramer of dimers.

It localises to the cytoplasm. It carries out the reaction 3-amino-2-oxopropyl phosphate + 1-deoxy-D-xylulose 5-phosphate = pyridoxine 5'-phosphate + phosphate + 2 H2O + H(+). It participates in cofactor biosynthesis; pyridoxine 5'-phosphate biosynthesis; pyridoxine 5'-phosphate from D-erythrose 4-phosphate: step 5/5. Functionally, catalyzes the complicated ring closure reaction between the two acyclic compounds 1-deoxy-D-xylulose-5-phosphate (DXP) and 3-amino-2-oxopropyl phosphate (1-amino-acetone-3-phosphate or AAP) to form pyridoxine 5'-phosphate (PNP) and inorganic phosphate. In Desulfosudis oleivorans (strain DSM 6200 / JCM 39069 / Hxd3) (Desulfococcus oleovorans), this protein is Pyridoxine 5'-phosphate synthase.